The sequence spans 562 residues: Apical membrane antigen 1 (562 aa).

Residues 1-21 (MNKIYCILFLSAQCLVHMGKC) form the signal peptide. At 22–484 (EPNQKPSRLT…QYAQGESKNQ (463 aa)) the chain is on the extracellular side. 2 N-linked (GlcNAc...) asparagine glycosylation sites follow: N84 and N176. 8 disulfide bridges follow: C94-C247, C162-C192, C208-C220, C265-C363, C282-C354, C388-C444, C432-C449, and C434-C451. N226 carries an N-linked (GlcNAc...) asparagine glycan. Residues N405 and N441 are each glycosylated (N-linked (GlcNAc...) asparagine). The helical transmembrane segment at 485–507 (MLLIIIGITGGVCVVALASMFYF) threads the bilayer. At 508–562 (RKKAHNDKYDKMEQADGYGKPTTRKDEMLDPEASFWGEEKRASHTTPVLMEKPYY) the chain is on the cytoplasmic side. The segment at 519 to 543 (MEQADGYGKPTTRKDEMLDPEASFW) is disordered.

This sequence belongs to the apicomplexan parasites AMA1 family.

It localises to the membrane. Its function is as follows. Involved in parasite invasion of erythrocytes. The protein is Apical membrane antigen 1 (AMA-1) of Plasmodium fragile.